We begin with the raw amino-acid sequence, 638 residues long: Meiosis initiator protein (638 aa).

Disordered regions lie at residues 1 to 21 (MFGS…SLGP), 60 to 79 (NQRN…KNHT), 138 to 249 (LAGL…KGGQ), 404 to 433 (PSAY…SLHR), and 447 to 537 (GNSK…PCPP). Positions 7-20 (YLGSSEQPRANSLG) are enriched in polar residues. The interval 62–75 (RNQNKLLSPNKKQR) is basic motif; degenerate. A bHLH domain is found at 62–116 (RNQNKLLSPNKKQRKNHTSKLQELALLLPIALKTGTKKLTKKEILVHVLQYIQYL). The helix-loop-helix motif stretch occupies residues 76–116 (KNHTSKLQELALLLPIALKTGTKKLTKKEILVHVLQYIQYL). Residues 157-167 (TPSSSPSSQKS) are compositionally biased toward low complexity. Residues 182 to 191 (TQASESQTRT) show a composition bias toward polar residues. Over residues 412 to 430 (PQEKDTASKAPKDPPESHS) the composition is skewed to basic and acidic residues. The segment covering 453 to 465 (SSSSSSSSSSSSS) has biased composition (low complexity). A compositionally biased stretch (basic residues) spans 528–537 (KEKKKGPCPP). The HMG box DNA-binding region spans 540-608 (KKKCVNGFIM…QHNRIVKQDG (69 aa)).

As to quaternary structure, interacts with STRA8.

Its subcellular location is the nucleus. Gatekeeper of meiotic initiation in both male and female germ cells. In complex with STRA8, directly activates the transcription of a subset of critical meiotic genes playing a central role in cell-cycle switching from mitosis to meiosis. Temporal expression of MEIOSIN is required for meiotic entry decision. In Homo sapiens (Human), this protein is Meiosis initiator protein.